The sequence spans 22 residues: Peroxidase 5 (22 aa).

The protein belongs to the peroxidase family. Classical plant (class III) peroxidase subfamily. Heme b is required as a cofactor. The cofactor is Ca(2+).

The protein resides in the secreted. The protein localises to the cell wall. It carries out the reaction 2 a phenolic donor + H2O2 = 2 a phenolic radical donor + 2 H2O. Removal of H(2)O(2), oxidation of toxic reductants, biosynthesis and degradation of lignin, suberization, auxin catabolism, response to environmental stresses such as wounding, pathogen attack and oxidative stress. These functions might be dependent on each isozyme/isoform in each plant tissue. The chain is Peroxidase 5 from Cycas revoluta (Sago palm).